The primary structure comprises 224 residues: Probable Brix domain-containing ribosomal biogenesis protein (224 aa).

Residues 1-196 (MMLITTSHRP…IWIMEDGRRW (196 aa)) enclose the Brix domain.

Functionally, probably involved in the biogenesis of the ribosome. This Pyrococcus abyssi (strain GE5 / Orsay) protein is Probable Brix domain-containing ribosomal biogenesis protein.